The sequence spans 312 residues: Ribosomal RNA small subunit methyltransferase H (312 aa).

S-adenosyl-L-methionine contacts are provided by residues 33-35 (GGY), aspartate 51, phenylalanine 78, aspartate 97, and glutamine 104.

This sequence belongs to the methyltransferase superfamily. RsmH family.

It is found in the cytoplasm. The enzyme catalyses cytidine(1402) in 16S rRNA + S-adenosyl-L-methionine = N(4)-methylcytidine(1402) in 16S rRNA + S-adenosyl-L-homocysteine + H(+). Its function is as follows. Specifically methylates the N4 position of cytidine in position 1402 (C1402) of 16S rRNA. This is Ribosomal RNA small subunit methyltransferase H from Orientia tsutsugamushi (strain Boryong) (Rickettsia tsutsugamushi).